Here is a 377-residue protein sequence, read N- to C-terminus: Chaperone protein DnaJ (377 aa).

Residues 5–70 enclose the J domain; it reads DYYEVLGVGK…EKKAAYDQYG (66 aa). The segment at 137 to 215 adopts a CR-type zinc-finger fold; the sequence is GHEAQIRVPH…CHGQGKLKSQ (79 aa). Positions 150, 153, 167, 170, 189, 192, 203, and 206 each coordinate Zn(2+). CXXCXGXG motif repeat units follow at residues 150–157, 167–174, 189–196, and 203–210; these read CDHCHGNG, CPTCHGAG, CPKCHGSG, and CTKCHGQG.

The protein belongs to the DnaJ family. As to quaternary structure, homodimer. It depends on Zn(2+) as a cofactor.

It is found in the cytoplasm. Participates actively in the response to hyperosmotic and heat shock by preventing the aggregation of stress-denatured proteins and by disaggregating proteins, also in an autonomous, DnaK-independent fashion. Unfolded proteins bind initially to DnaJ; upon interaction with the DnaJ-bound protein, DnaK hydrolyzes its bound ATP, resulting in the formation of a stable complex. GrpE releases ADP from DnaK; ATP binding to DnaK triggers the release of the substrate protein, thus completing the reaction cycle. Several rounds of ATP-dependent interactions between DnaJ, DnaK and GrpE are required for fully efficient folding. Also involved, together with DnaK and GrpE, in the DNA replication of plasmids through activation of initiation proteins. This is Chaperone protein DnaJ from Cupriavidus taiwanensis (strain DSM 17343 / BCRC 17206 / CCUG 44338 / CIP 107171 / LMG 19424 / R1) (Ralstonia taiwanensis (strain LMG 19424)).